The primary structure comprises 114 residues: UPF0145 protein TT_C1581 (114 aa).

The protein belongs to the UPF0145 family.

The protein is UPF0145 protein TT_C1581 of Thermus thermophilus (strain ATCC BAA-163 / DSM 7039 / HB27).